The primary structure comprises 284 residues: NAD/NADP-dependent indole-3-acetaldehyde reductase (284 aa).

Residue Asp49 coordinates NADPH. Catalysis depends on proton donor residues Tyr54 and His109. Residues Ser143, Gln165, Leu196, Arg201, Thr239, Thr240, Thr241, Ser242, Lys243, and Arg246 each contribute to the NADPH site.

Belongs to the aldo/keto reductase family. In terms of assembly, monomer.

The protein localises to the cytoplasm. It localises to the nucleus. It carries out the reaction indole-3-ethanol + NAD(+) = indole-3-acetaldehyde + NADH + H(+). It catalyses the reaction indole-3-ethanol + NADP(+) = indole-3-acetaldehyde + NADPH + H(+). This chain is NAD/NADP-dependent indole-3-acetaldehyde reductase, found in Schizosaccharomyces pombe (strain 972 / ATCC 24843) (Fission yeast).